Consider the following 237-residue polypeptide: Probable glutathione-independent glyoxalase SNO4 (237 aa).

Residues C138, H139, and E170 contribute to the active site.

Belongs to the peptidase C56 family. HSP31-like subfamily. As to quaternary structure, homodimer.

It localises to the cytoplasm. The protein localises to the P-body. The enzyme catalyses methylglyoxal + H2O = (R)-lactate + H(+). Its function is as follows. Catalyzes the conversion of methylglyoxal (MG) to D-lactate in a single glutathione (GSH)-independent step. May play a role in detoxifying endogenously produced glyoxals. Involved in protection against reactive oxygen species (ROS). Important for viability in stationary phase. May negatively regulate TORC1 in response to nutrient limitation. This Saccharomyces cerevisiae (strain ATCC 204508 / S288c) (Baker's yeast) protein is Probable glutathione-independent glyoxalase SNO4.